Consider the following 268-residue polypeptide: Phosphatidylglycerol--prolipoprotein diacylglyceryl transferase (268 aa).

Helical transmembrane passes span 14–34 (IIFS…LIGF), 60–80 (LLFN…VLFY), 95–115 (VWEG…AMLV), 124–144 (FWVV…MGRI), 176–196 (SQLY…NWFI), 203–223 (GSVA…VEFF), and 238–258 (ISMG…FIVL). A 1,2-diacyl-sn-glycero-3-phospho-(1'-sn-glycerol) is bound at residue Arg143.

Belongs to the Lgt family.

It is found in the cell inner membrane. The catalysed reaction is L-cysteinyl-[prolipoprotein] + a 1,2-diacyl-sn-glycero-3-phospho-(1'-sn-glycerol) = an S-1,2-diacyl-sn-glyceryl-L-cysteinyl-[prolipoprotein] + sn-glycerol 1-phosphate + H(+). The protein operates within protein modification; lipoprotein biosynthesis (diacylglyceryl transfer). Catalyzes the transfer of the diacylglyceryl group from phosphatidylglycerol to the sulfhydryl group of the N-terminal cysteine of a prolipoprotein, the first step in the formation of mature lipoproteins. This is Phosphatidylglycerol--prolipoprotein diacylglyceryl transferase from Mannheimia succiniciproducens (strain KCTC 0769BP / MBEL55E).